We begin with the raw amino-acid sequence, 156 residues long: Phosphopantetheine adenylyltransferase (156 aa).

Threonine 9 provides a ligand contact to substrate. ATP-binding positions include 9–10 (TF) and histidine 17. Residues lysine 41, leucine 73, and arginine 87 each contribute to the substrate site. Residues 88–90 (GVR), glutamate 98, and 123–129 (WAFVSST) each bind ATP.

This sequence belongs to the bacterial CoaD family. Homohexamer. It depends on Mg(2+) as a cofactor.

The protein resides in the cytoplasm. The catalysed reaction is (R)-4'-phosphopantetheine + ATP + H(+) = 3'-dephospho-CoA + diphosphate. It participates in cofactor biosynthesis; coenzyme A biosynthesis; CoA from (R)-pantothenate: step 4/5. Functionally, reversibly transfers an adenylyl group from ATP to 4'-phosphopantetheine, yielding dephospho-CoA (dPCoA) and pyrophosphate. In Haemophilus influenzae (strain ATCC 51907 / DSM 11121 / KW20 / Rd), this protein is Phosphopantetheine adenylyltransferase.